The sequence spans 227 residues: Calcium-binding protein 1 (227 aa).

Glycine 2 is lipidated: N-myristoyl glycine. The S-palmitoyl cysteine moiety is linked to residue cysteine 4. EF-hand domains follow at residues 82–117 (EEIEELREAFREFDKDKDGYINCRDLGNCMRTMGYM), 136–153 (GHVDFDDFVELMGPKLLA), 159–194 (IGVKELRDAFREFDTNGDGEISTSELREAMRKLLGH), and 196–227 (VGHRDIEEIIRDVDLNGDGRVDFEEFVRMMSR). Ca(2+) contacts are provided by aspartate 95, aspartate 97, aspartate 99, tyrosine 101, and aspartate 106. The Ca(2+) site is built by aspartate 172, asparagine 174, aspartate 176, and glutamate 178. At serine 180 the chain carries Phosphoserine. Residues glutamate 183, aspartate 209, asparagine 211, aspartate 213, arginine 215, and glutamate 220 each coordinate Ca(2+).

Homodimer; when bound to calcium or magnesium. Interacts (via C-terminus) with ITPR1, ITPR2 and ITPR3. This binding is calcium dependent and the interaction correlates with calcium concentration. An additional calcium-independent interaction with the N-terminus of ITPR1 results in a decreased InsP(3) binding to the receptor. Interacts with CACNA1A (via C-terminal CDB motif) in the pre- and postsynaptic membranes. Interacts with CACNA1D and CACNA1C (via C-terminal C and IQ motifs). The binding to the C motif is calcium independent whereas the binding to IQ requires the presence of calcium and is mutually exclusive with calmodulin binding. Interacts with TRPC5 (via C-terminus). Interacts (via EF-hands 1 and 2) at microtubules with MAP1LC3B. Interacts with MYO1C. Interacts (via EF-hands 1 and 2) with NSMF (via the central NLS-containing motif region), the interaction occurs in a calcium dependent manner after synaptic NMDA receptor stimulation and prevents nuclear import of NSMF. Interacts with SPACA9 homolog. Phosphorylated. The phosphorylation regulates the activity. Expressed in the inner retina, specifically in amacrine cells and in cone OFF-bipolar cells (at protein level).

Functionally, modulates calcium-dependent activity of inositol 1,4,5-triphosphate receptors (ITPRs). Inhibits agonist-induced intracellular calcium signaling. Enhances inactivation and does not support calcium-dependent facilitation of voltage-dependent P/Q-type calcium channels. Causes calcium-dependent facilitation and inhibits inactivation of L-type calcium channels by binding to the same sites as calmodulin in the C-terminal domain of CACNA1C, but has an opposite effect on channel function. Suppresses the calcium-dependent inactivation of CACNA1D. Inhibits TRPC5 channels. Prevents NMDA receptor-induced cellular degeneration. Required for the normal transfer of light signals through the retina. This chain is Calcium-binding protein 1 (Cabp1), found in Mus musculus (Mouse).